Here is a 464-residue protein sequence, read N- to C-terminus: tRNA-2-methylthio-N(6)-dimethylallyladenosine synthase (464 aa).

The 117-residue stretch at 19 to 135 folds into the MTTase N-terminal domain; sequence GSYWITTFGC…LENLLERVDS (117 aa). Residues Cys-28, Cys-64, Cys-98, Cys-170, Cys-174, and Cys-177 each contribute to the [4Fe-4S] cluster site. The 238-residue stretch at 156–393 folds into the Radical SAM core domain; the sequence is RDSTICGWVN…NELVEATSRK (238 aa). The TRAM domain occupies 396 to 464; the sequence is QRYLNNTESV…SFSLSGQIYK (69 aa).

Belongs to the methylthiotransferase family. MiaB subfamily. As to quaternary structure, monomer. [4Fe-4S] cluster serves as cofactor.

Its subcellular location is the cytoplasm. It carries out the reaction N(6)-dimethylallyladenosine(37) in tRNA + (sulfur carrier)-SH + AH2 + 2 S-adenosyl-L-methionine = 2-methylsulfanyl-N(6)-dimethylallyladenosine(37) in tRNA + (sulfur carrier)-H + 5'-deoxyadenosine + L-methionine + A + S-adenosyl-L-homocysteine + 2 H(+). Its function is as follows. Catalyzes the methylthiolation of N6-(dimethylallyl)adenosine (i(6)A), leading to the formation of 2-methylthio-N6-(dimethylallyl)adenosine (ms(2)i(6)A) at position 37 in tRNAs that read codons beginning with uridine. This is tRNA-2-methylthio-N(6)-dimethylallyladenosine synthase from Prochlorococcus marinus (strain MIT 9515).